A 226-amino-acid chain; its full sequence is Probable peroxiredoxin prdx-3 (226 aa).

A Thioredoxin domain is found at 33 to 191 (LGPKNTVPAF…TLRVLKAFQF (159 aa)). Cysteine 78 functions as the Cysteine sulfenic acid (-SOH) intermediate in the catalytic mechanism.

The protein belongs to the peroxiredoxin family. AhpC/Prx1 subfamily. Homodimer; disulfide-linked, upon oxidation.

It catalyses the reaction a hydroperoxide + [thioredoxin]-dithiol = an alcohol + [thioredoxin]-disulfide + H2O. In terms of biological role, thiol-specific peroxidase that catalyzes the reduction of hydrogen peroxide and organic hydroperoxides to water and alcohols, respectively. Plays a role in cell protection against oxidative stress by detoxifying peroxides and as sensor of hydrogen peroxide-mediated signaling events. This Caenorhabditis elegans protein is Probable peroxiredoxin prdx-3 (prdx-3).